Here is a 258-residue protein sequence, read N- to C-terminus: Synapse differentiation-inducing gene protein 1 (258 aa).

The Cytoplasmic portion of the chain corresponds to 1–181 (MDGIIEQKSV…NFLMMPPRDH (181 aa)). Phosphoserine is present on serine 137. The chain crosses the membrane as a helical span at residues 182 to 202 (LGLSVFSMLCCFWPLGIAAFY). Residues 203–228 (LSHETNKAVAKGDFHQASTSSRRALF) lie on the Extracellular side of the membrane. An intramembrane region (helical) is located at residues 229–249 (LAVLSITIGTGIYVGVAVALI). Residues 250–258 (AYLSKNNHL) lie on the Extracellular side of the membrane.

Belongs to the CD225/Dispanin family. In terms of assembly, homodimer. Interacts with GRIA1 and GRIA2. In terms of tissue distribution, brain-specific. Expressed in Purkinje neurons in cerebellum. Also detected in the hippocampus. Found at excitatory synapses and postsynaptic cells.

Its subcellular location is the cell membrane. It is found in the early endosome membrane. The protein localises to the postsynaptic density membrane. The protein resides in the synapse. It localises to the cell projection. Its subcellular location is the dendrite. It is found in the dendritic spine. In terms of biological role, may regulate AMPA receptor content at nascent synapses, and have a role in postsynaptic development and maturation. This Mus musculus (Mouse) protein is Synapse differentiation-inducing gene protein 1 (Syndig1).